The sequence spans 253 residues: Complement C1q subcomponent subunit B (253 aa).

Positions 1–27 (MMMKIPWGSIPVLMLLLLLGLIDISQA) are cleaved as a signal peptide. A Pyrrolidone carboxylic acid modification is found at Gln28. Residues Pro35, Pro38, Pro41, Pro53, and Pro56 each carry the 4-hydroxyproline modification. Collagen-like domains lie at 37 to 86 (IPGI…PGNP) and 60 to 114 (GEKG…GESG). A disordered region spans residues 38-115 (PGIPGIPGTP…APGPKGESGD (78 aa)). 5-hydroxylysine is present on residues Lys59 and Lys62. Pro65 carries the 4-hydroxyproline modification. The segment covering 70–79 (DHGEFGEKGD) has biased composition (basic and acidic residues). 5-hydroxylysine is present on Lys77. Residues 80–92 (PGIPGNPGKVGPK) are compositionally biased toward low complexity. 2 positions are modified to 4-hydroxyproline: Pro83 and Pro86. 2 positions are modified to 5-hydroxylysine: Lys92 and Lys98. The span at 96–105 (GPKGGPGAPG) shows a compositional bias: gly residues. 3 positions are modified to 4-hydroxyproline: Pro101, Pro104, and Pro107. Lys110 carries the 5-hydroxylysine modification. The C1q domain occupies 117–253 (KATQKIAFSA…GFLLFPDMEA (137 aa)). An intrachain disulfide couples Cys181 to Cys198. Residues Asp199, Tyr200, and Gln206 each contribute to the Ca(2+) site.

In terms of assembly, core component of the complement C1 complex, a calcium-dependent complex composed of 1 molecule of the C1Q subcomplex, 2 molecules of C1R and 2 molecules of C1S. The C1Q subcomplex is composed 18 subunits: 3 chains of C1QA, C1QB, and C1QC trimerize to form 6 collagen-like triple helices connected to six globular ligand-recognition modules (C1q domain). In terms of processing, hydroxylated on lysine and proline residues. Hydroxylated lysine residues can be glycosylated. Human C1Q contains up to 68.3 hydroxylysine-galactosylglucose residues and up to 2.5 hydroxylysine-galactose per molecule. Total percentage hydroxylysine residues glycosylated is 86.4%.

It localises to the secreted. Its subcellular location is the cell surface. The C1Q subcomplex is inhibited by sulfated molecules, such as triterpenoid sulfates, heparan sulfate, or chondroitin sulfates. Core component of the complement C1 complex, a multiprotein complex that initiates the classical pathway of the complement system, a cascade of proteins that leads to phagocytosis and breakdown of pathogens and signaling that strengthens the adaptive immune system. The classical complement pathway is initiated by the C1Q subcomplex of the C1 complex, which specifically binds IgG or IgM immunoglobulins complexed with antigens, forming antigen-antibody complexes on the surface of pathogens: C1QA, together with C1QB and C1QC, specifically recognizes and binds the Fc regions of IgG or IgM via its C1q domain. Immunoglobulin-binding activates the proenzyme C1R, which cleaves C1S, initiating the proteolytic cascade of the complement system. The C1Q subcomplex is activated by a hexamer of IgG complexed with antigens, while it is activated by a pentameric IgM. The C1Q subcomplex also recognizes and binds phosphatidylserine exposed on the surface of cells undergoing programmed cell death, possibly promoting activation of the complement system. The sequence is that of Complement C1q subcomponent subunit B from Homo sapiens (Human).